Here is a 139-residue protein sequence, read N- to C-terminus: uncharacterized protein (139 aa).

This is an uncharacterized protein from Galliformes (FAdV-1).